Reading from the N-terminus, the 140-residue chain is Transmembrane protein 107 (140 aa).

The next 2 helical transmembrane spans lie at 7–27 (LVPS…TLFW) and 53–73 (LVAA…GFLS). Asn79 carries N-linked (GlcNAc...) asparagine glycosylation. A run of 2 helical transmembrane segments spans residues 83–103 (SLLS…FVFE) and 113–133 (IFTF…IAVF).

In terms of assembly, part of the tectonic-like complex (also named B9 complex). Interacts with TMEM237, TMEM231, MKS1 and TMEM216.

The protein resides in the membrane. It localises to the cell projection. Its subcellular location is the cilium. Plays a role in cilia formation and embryonic patterning. Requires for normal Sonic hedgehog (Shh) signaling in the neural tube and acts in combination with GLI2 and GLI3 to pattern ventral and intermediate neuronal cell types. During ciliogenesis regulates the ciliary transition zone localization of some MKS complex proteins. The protein is Transmembrane protein 107 of Mus musculus (Mouse).